The following is a 354-amino-acid chain: Arginase-2, mitochondrial (354 aa).

Residues Met1 to Ser22 constitute a mitochondrion transit peptide. Residues His120, Asp143, His145, and Asp147 each coordinate Mn(2+). Residues His145 to Asn149, Ser156 to Asn158, and Glu202 contribute to the substrate site. Mn(2+)-binding residues include Asp251 and Asp253. Residues Thr265 and Glu296 each coordinate substrate.

The protein belongs to the arginase family. As to quaternary structure, homotrimer. Requires Mn(2+) as cofactor.

Its subcellular location is the mitochondrion. The catalysed reaction is L-arginine + H2O = urea + L-ornithine. It functions in the pathway nitrogen metabolism; urea cycle; L-ornithine and urea from L-arginine: step 1/1. Functionally, may play a role in the regulation of extra-urea cycle arginine metabolism and also in down-regulation of nitric oxide synthesis. Extrahepatic arginase functions to regulate L-arginine bioavailability to nitric oxid synthase (NOS). Arginine metabolism is a critical regulator of innate and adaptive immune responses. Seems to be involved in negative regulation of the survival capacity of activated CD4(+) and CD8(+) T cells. May suppress inflammation-related signaling in asthmatic airway epithelium. May contribute to the immune evasion of H.pylori by restricting M1 macrophage activation and polyamine metabolism. May play a role in promoting prenatal immune suppression. Regulates RPS6KB1 signaling, which promotes endothelial cell senescence and inflammation and implicates NOS3/eNOS dysfunction. Can inhibit endothelial autophagy independently of its enzymatic activity implicating mTORC2 signaling. Involved in vascular smooth muscle cell senescence and apoptosis independently of its enzymatic activity. The chain is Arginase-2, mitochondrial (Arg2) from Mus musculus (Mouse).